Consider the following 564-residue polypeptide: Laccase-22 (564 aa).

Positions 1–25 (MAVLPESRRLSLLLMAACFLLQALS) are cleaved as a signal peptide. Plastocyanin-like domains are found at residues 36 to 152 (NVVM…PKLG) and 162 to 314 (KEAV…YANT). 2 N-linked (GlcNAc...) asparagine glycosylation sites follow: N41 and N82. Cu cation-binding residues include H86 and H88. A glycan (N-linked (GlcNAc...) asparagine) is linked at N118. Positions 131 and 133 each coordinate Cu cation. N-linked (GlcNAc...) asparagine glycans are attached at residues N191, N302, N331, N379, N389, N424, N437, and N447. In terms of domain architecture, Plastocyanin-like 3 spans 414 to 548 (DFPATPLHKF…KMAFVVDNGK (135 aa)). Cu cation contacts are provided by H465, H468, H470, H527, C528, H529, and H533.

It belongs to the multicopper oxidase family. Cu cation is required as a cofactor.

It localises to the secreted. Its subcellular location is the extracellular space. The protein resides in the apoplast. The enzyme catalyses 4 hydroquinone + O2 = 4 benzosemiquinone + 2 H2O. Its function is as follows. Lignin degradation and detoxification of lignin-derived products. The sequence is that of Laccase-22 (LAC22) from Oryza sativa subsp. japonica (Rice).